Reading from the N-terminus, the 344-residue chain is MVTERQQDILNLIIDIFTKTHEPVGSKALQESINSSSATIRNDMAELEKQGLLEKAHTSSGRMPSVAGFQYYVKHSLDFDRLAENEVYEIVKAFDQEFFKLEDILQESANLLTDLSGCTVVALDVEPSRQRLTAFDIVVLGQHTALAVFTLDESRTVTSQFLIPRNFLQEDLLKLKSIIQERFLGHTVLDIHYKIRTEIPQIIQRYFTTTDNVIDLFEHIFKEMFNENIVMAGKVNLLNFANLAAYQFFDQPQKVALEIREGLREDQMQNVRVADGQESCLADLAVISSKFLIPYRGVGILAIIGPVNLDYQQLINQVNVVNRVLTMKLTDFYRYLSSNHYEVH.

Belongs to the HrcA family.

Its function is as follows. Negative regulator of class I heat shock genes (grpE-dnaK-dnaJ and groELS operons). Prevents heat-shock induction of these operons. This chain is Heat-inducible transcription repressor HrcA, found in Streptococcus pneumoniae (strain 70585).